The following is a 342-amino-acid chain: N-acetyl-gamma-glutamyl-phosphate reductase (342 aa).

The active site involves Cys-149.

Belongs to the NAGSA dehydrogenase family. Type 1 subfamily.

It localises to the cytoplasm. It catalyses the reaction N-acetyl-L-glutamate 5-semialdehyde + phosphate + NADP(+) = N-acetyl-L-glutamyl 5-phosphate + NADPH + H(+). It participates in amino-acid biosynthesis; L-arginine biosynthesis; N(2)-acetyl-L-ornithine from L-glutamate: step 3/4. In terms of biological role, catalyzes the NADPH-dependent reduction of N-acetyl-5-glutamyl phosphate to yield N-acetyl-L-glutamate 5-semialdehyde. This is N-acetyl-gamma-glutamyl-phosphate reductase from Jannaschia sp. (strain CCS1).